The sequence spans 281 residues: MGAFVNTKVYIENKNIRDWLSEALSMFMYMSLLLGSAATGHFSGREDDALFGVIFQGFSITFGIYIGGAMSGAIINPALTLAVALLGKISWRKCIVLQSAQYIGSFIASAVVYLIYNDSLDAFGAGANFTATEPGVFRKDVAGIWSTFPKTYLKERGAIFNQIFCSMLLTFGFLAISDYKNFRPSKGLFPIAVGLLVMTVFLAFSYSTGAAMNPARDFSPRLWSLIIGYGIEVFSYNQYEWFWIPWLMPYVGAMLGALIYQLLIGAQWSKGQKGESKHKDP.

At 1–17 (MGAFVNTKVYIENKNIR) the chain is on the cytoplasmic side. The chain crosses the membrane as a helical span at residues 18–36 (DWLSEALSMFMYMSLLLGS). At 37-50 (AATGHFSGREDDAL) the chain is on the extracellular side. A helical transmembrane segment spans residues 51-69 (FGVIFQGFSITFGIYIGGA). Residues 70 to 71 (MS) lie on the Cytoplasmic side of the membrane. The segment at residues 72 to 84 (GAIINPALTLAVA) is an intramembrane region (discontinuously helical). Positions 76 to 78 (NPA) match the NPA 1 motif. Over 85 to 90 (LLGKIS) the chain is Cytoplasmic. The chain crosses the membrane as a helical span at residues 91 to 115 (WRKCIVLQSAQYIGSFIASAVVYLI). Over 116–157 (YNDSLDAFGAGANFTATEPGVFRKDVAGIWSTFPKTYLKERG) the chain is Extracellular. Asn-117 and Asn-128 each carry an N-linked (GlcNAc...) asparagine glycan. The chain crosses the membrane as a helical span at residues 158 to 175 (AIFNQIFCSMLLTFGFLA). At 176–187 (ISDYKNFRPSKG) the chain is on the cytoplasmic side. Residues 188–204 (LFPIAVGLLVMTVFLAF) form a helical membrane-spanning segment. Over 205–207 (SYS) the chain is Extracellular. Residues 208-222 (TGAAMNPARDFSPRL) constitute an intramembrane region (discontinuously helical). The short motif at 213 to 215 (NPA) is the NPA 2 element. The Extracellular portion of the chain corresponds to 223–241 (WSLIIGYGIEVFSYNQYEW). Residues 242–262 (FWIPWLMPYVGAMLGALIYQL) traverse the membrane as a helical segment. The Cytoplasmic segment spans residues 263-281 (LIGAQWSKGQKGESKHKDP).

Belongs to the MIP/aquaporin (TC 1.A.8) family.

It is found in the cell membrane. It carries out the reaction H2O(in) = H2O(out). Functionally, aquaglyceroporin that may modulate the water content and osmolytes during anhydrobiosis. This is Aquaporin-9 from Milnesium tardigradum (Water bear).